Here is a 252-residue protein sequence, read N- to C-terminus: Transcriptional regulatory protein HptR (252 aa).

The 116-residue stretch at 3 to 118 folds into the Response regulatory domain; the sequence is KVVICDDERI…QLEVILGRLV (116 aa). Residue Asp-55 is modified to 4-aspartylphosphate. Residues 153–250 form the HTH araC/xylS-type domain; sequence NQIVDQIKQS…QMSPSDYCKQ (98 aa). 2 consecutive DNA-binding regions (H-T-H motif) follow at residues 170–191 and 217–240; these read SDLI…KDHV and HYEI…KKYL.

In terms of processing, phosphorylated by HptS.

It localises to the cytoplasm. Its function is as follows. Member of the two-component regulatory system HptS/HptR that regulates genes involved in hexose phosphate transport system in response to changes in extracellular phosphate sources. Activates uhpT expression to facilitate glucose-6-phosphate/G6P utilization by directly binding to its promoter. Antagonizes CcpA-dependent transcription of a subset of CcpA-regulated genes involved in antibiotic susceptibility. This chain is Transcriptional regulatory protein HptR (hptR), found in Staphylococcus aureus (strain Mu50 / ATCC 700699).